A 193-amino-acid polypeptide reads, in one-letter code: Leucyl/phenylalanyl-tRNA--protein transferase (193 aa).

The protein belongs to the L/F-transferase family.

The protein resides in the cytoplasm. It carries out the reaction N-terminal L-lysyl-[protein] + L-leucyl-tRNA(Leu) = N-terminal L-leucyl-L-lysyl-[protein] + tRNA(Leu) + H(+). The catalysed reaction is N-terminal L-arginyl-[protein] + L-leucyl-tRNA(Leu) = N-terminal L-leucyl-L-arginyl-[protein] + tRNA(Leu) + H(+). The enzyme catalyses L-phenylalanyl-tRNA(Phe) + an N-terminal L-alpha-aminoacyl-[protein] = an N-terminal L-phenylalanyl-L-alpha-aminoacyl-[protein] + tRNA(Phe). In terms of biological role, functions in the N-end rule pathway of protein degradation where it conjugates Leu, Phe and, less efficiently, Met from aminoacyl-tRNAs to the N-termini of proteins containing an N-terminal arginine or lysine. The polypeptide is Leucyl/phenylalanyl-tRNA--protein transferase (Akkermansia muciniphila (strain ATCC BAA-835 / DSM 22959 / JCM 33894 / BCRC 81048 / CCUG 64013 / CIP 107961 / Muc)).